The primary structure comprises 294 residues: Phosphatidylglycerol--prolipoprotein diacylglyceryl transferase (294 aa).

The next 7 membrane-spanning stretches (helical) occupy residues 10-30 (VALALGPIEIHWYGLMYLLAF), 55-75 (LVFYGALGVILGGRIGYVLFY), 91-111 (WEGGMSFHGGFIGVMLGMWFF), 119-139 (AFQVFDFIVPCVPTGLLFGRI), 196-216 (PSQLYEAFAEGLLLFIFLWWY), 224-244 (MAASAVFLLGYGISRFIIEFF), and 258-278 (WMTKGQLLSAPMIIAGLIMLI). Arg138 is a binding site for a 1,2-diacyl-sn-glycero-3-phospho-(1'-sn-glycerol).

Belongs to the Lgt family.

It localises to the cell inner membrane. The enzyme catalyses L-cysteinyl-[prolipoprotein] + a 1,2-diacyl-sn-glycero-3-phospho-(1'-sn-glycerol) = an S-1,2-diacyl-sn-glyceryl-L-cysteinyl-[prolipoprotein] + sn-glycerol 1-phosphate + H(+). The protein operates within protein modification; lipoprotein biosynthesis (diacylglyceryl transfer). Catalyzes the transfer of the diacylglyceryl group from phosphatidylglycerol to the sulfhydryl group of the N-terminal cysteine of a prolipoprotein, the first step in the formation of mature lipoproteins. This is Phosphatidylglycerol--prolipoprotein diacylglyceryl transferase from Psychrobacter arcticus (strain DSM 17307 / VKM B-2377 / 273-4).